The primary structure comprises 156 residues: UPF0336 protein SACE_6876 (156 aa).

Residues 8–128 (IGREYPPTPA…DFLTVRAEIT (121 aa)) enclose the MaoC-like domain.

It belongs to the UPF0336 family.

The polypeptide is UPF0336 protein SACE_6876 (Saccharopolyspora erythraea (strain ATCC 11635 / DSM 40517 / JCM 4748 / NBRC 13426 / NCIMB 8594 / NRRL 2338)).